The primary structure comprises 259 residues: Expansin-B4 (259 aa).

Residues 1–23 form the signal peptide; it reads MASSQRYFALLALFAVSLKFCYC. An N-linked (GlcNAc...) asparagine glycan is attached at N25. Residues 51–161 form the Expansin-like EG45 domain; it reads GGACGYGSAV…KRAACLYRGT (111 aa). 3 disulfides stabilise this stretch: C54/C83, C86/C156, and C91/C97. The region spanning 174 to 255 is the Expansin-like CBD domain; the sequence is YYISFVVEYE…NWKPDESYRS (82 aa).

Belongs to the expansin family. Expansin B subfamily.

The protein resides in the secreted. It is found in the cell wall. The protein localises to the membrane. May cause loosening and extension of plant cell walls by disrupting non-covalent bonding between cellulose microfibrils and matrix glucans. No enzymatic activity has been found. This Arabidopsis thaliana (Mouse-ear cress) protein is Expansin-B4 (EXPB4).